The following is a 235-amino-acid chain: Probable 2-phosphosulfolactate phosphatase (235 aa).

It belongs to the ComB family. It depends on Mg(2+) as a cofactor.

It catalyses the reaction (2R)-O-phospho-3-sulfolactate + H2O = (2R)-3-sulfolactate + phosphate. The sequence is that of Probable 2-phosphosulfolactate phosphatase from Clostridium novyi (strain NT).